Consider the following 476-residue polypeptide: Serine protease HTRA1B (476 aa).

An N-terminal signal peptide occupies residues 1–19; the sequence is MRLLILCASIILVPLLCDA. Residues 25–109 form the IGFBP N-terminal domain; the sequence is YVIGCPERCD…RGKTGVCVCK (85 aa). Intrachain disulfides connect Cys29–Cys54, Cys33–Cys56, Cys38–Cys57, Cys45–Cys60, Cys68–Cys85, and Cys79–Cys106. Residues 94 to 153 enclose the Kazal-like domain; sequence TTTVRRRGKTGVCVCKSSEPVCGSDGVSYRNICELKRVSNRAQKLQQPPIIFIQRGACGK. Residues 200–360 form a serine protease region; it reads GSGFVVSEDG…IPSDKIRQFL (161 aa). Active-site charge relay system residues include His216, Asp246, and Ser324. A PDZ domain is found at 361-463; that stretch reads AESHDRQAKG…LRAVVRRGNE (103 aa).

The protein belongs to the peptidase S1C family. Forms homotrimers. In the presence of substrate, may form higher-order multimers in a PDZ-independent manner.

The protein resides in the secreted. It is found in the cytoplasm. The protein localises to the cytosol. Functionally, serine protease with a variety of targets, including extracellular matrix proteins and proteoglycans. Through cleavage of proteoglycans, may release soluble FGF-glycosaminoglycan complexes that promote the range and intensity of FGF signals in the extracellular space. Regulates the availability of insulin-like growth factors (IGFs) by cleaving IGF-binding proteins. Inhibits signaling mediated by TGF-beta family members. Consequently, may regulate many physiological processes. Intracellularly, degrades TSC2, leading to the activation of TSC2 downstream targets. In Danio rerio (Zebrafish), this protein is Serine protease HTRA1B (htra1b).